A 416-amino-acid polypeptide reads, in one-letter code: Probable glucan 1,3-beta-glucosidase A (416 aa).

The signal sequence occupies residues 1–22 (MFVESAKKALLALSLLAASAQA). Asparagine 183 is a glycosylation site (N-linked (GlcNAc...) asparagine). Glutamate 210 (proton donor) is an active-site residue. Intrachain disulfides connect cysteine 290–cysteine 415 and cysteine 316–cysteine 342. Residue glutamate 308 is the Nucleophile of the active site.

This sequence belongs to the glycosyl hydrolase 5 (cellulase A) family. As to quaternary structure, monomer. Requires Mn(2+) as cofactor.

Its subcellular location is the secreted. The catalysed reaction is Successive hydrolysis of beta-D-glucose units from the non-reducing ends of (1-&gt;3)-beta-D-glucans, releasing alpha-glucose.. Its function is as follows. Beta-glucanases participate in the metabolism of beta-glucan, the main structural component of the cell wall. It could also function biosynthetically as a transglycosylase. This is Probable glucan 1,3-beta-glucosidase A (exgA) from Aspergillus niger (strain ATCC MYA-4892 / CBS 513.88 / FGSC A1513).